Consider the following 612-residue polypeptide: C4-dicarboxylate transport sensor protein DctB (612 aa).

2 helical membrane-spanning segments follow: residues Ser-23–Glu-43 and Val-292–Leu-312. The stretch at Lys-328 to Leu-376 forms a coiled coil. Residues Ser-385–Val-599 enclose the Histidine kinase domain. At His-388 the chain carries Phosphohistidine; by autocatalysis.

In terms of processing, autophosphorylated.

Its subcellular location is the cell inner membrane. The catalysed reaction is ATP + protein L-histidine = ADP + protein N-phospho-L-histidine.. Functionally, member of the two-component regulatory system DctB/DctD, which regulates C4-dicarboxylate transport via regulation of expression of the dctPQM operon and dctA. DctB functions as a membrane-associated protein kinase that phosphorylates DctD in response to environmental signals. This Pseudomonas aeruginosa (strain ATCC 15692 / DSM 22644 / CIP 104116 / JCM 14847 / LMG 12228 / 1C / PRS 101 / PAO1) protein is C4-dicarboxylate transport sensor protein DctB.